The chain runs to 228 residues: Phosphoribosylformylglycinamidine synthase subunit PurQ (228 aa).

Positions 3–225 constitute a Glutamine amidotransferase type-1 domain; sequence FAVLVFPGSN…LTTLKSGVVT (223 aa). Cys86 (nucleophile) is an active-site residue. Residues His194 and Glu196 contribute to the active site.

Part of the FGAM synthase complex composed of 1 PurL, 1 PurQ and 2 PurS subunits.

Its subcellular location is the cytoplasm. The enzyme catalyses N(2)-formyl-N(1)-(5-phospho-beta-D-ribosyl)glycinamide + L-glutamine + ATP + H2O = 2-formamido-N(1)-(5-O-phospho-beta-D-ribosyl)acetamidine + L-glutamate + ADP + phosphate + H(+). It catalyses the reaction L-glutamine + H2O = L-glutamate + NH4(+). It functions in the pathway purine metabolism; IMP biosynthesis via de novo pathway; 5-amino-1-(5-phospho-D-ribosyl)imidazole from N(2)-formyl-N(1)-(5-phospho-D-ribosyl)glycinamide: step 1/2. In terms of biological role, part of the phosphoribosylformylglycinamidine synthase complex involved in the purines biosynthetic pathway. Catalyzes the ATP-dependent conversion of formylglycinamide ribonucleotide (FGAR) and glutamine to yield formylglycinamidine ribonucleotide (FGAM) and glutamate. The FGAM synthase complex is composed of three subunits. PurQ produces an ammonia molecule by converting glutamine to glutamate. PurL transfers the ammonia molecule to FGAR to form FGAM in an ATP-dependent manner. PurS interacts with PurQ and PurL and is thought to assist in the transfer of the ammonia molecule from PurQ to PurL. This chain is Phosphoribosylformylglycinamidine synthase subunit PurQ, found in Latilactobacillus sakei subsp. sakei (strain 23K) (Lactobacillus sakei subsp. sakei).